A 450-amino-acid polypeptide reads, in one-letter code: Class E vacuolar protein-sorting machinery protein HSE1 (450 aa).

The VHS domain occupies alanine 15–leucine 145. 3 disordered regions span residues tryptophan 141 to glutamate 167, phenylalanine 179 to serine 212, and proline 374 to tyrosine 450. Basic and acidic residues predominate over residues glutamate 147–glutamate 167. Residues aspartate 163 to serine 182 enclose the UIM domain. Over residues glutamine 184–leucine 196 the composition is skewed to polar residues. The span at glutamine 197 to glutamine 209 shows a compositional bias: low complexity. The SH3 domain maps to serine 212 to glutamate 271. Residues asparagine 394 to asparagine 432 are compositionally biased toward low complexity.

The protein belongs to the STAM family. In terms of assembly, component of the ESCRT-0 complex composed of HSE1 and VPS27.

It localises to the endosome membrane. Component of the ESCRT-0 complex which is the sorting receptor for ubiquitinated cargo proteins at the multivesicular body (MVB). In Candida glabrata (strain ATCC 2001 / BCRC 20586 / JCM 3761 / NBRC 0622 / NRRL Y-65 / CBS 138) (Yeast), this protein is Class E vacuolar protein-sorting machinery protein HSE1 (HSE1).